Consider the following 336-residue polypeptide: Dihydroorotate dehydrogenase (quinone) (336 aa).

Residues 62–66 (AGLDK) and threonine 86 each bind FMN. Lysine 66 provides a ligand contact to substrate. 111–115 (NRMGF) serves as a coordination point for substrate. FMN-binding residues include asparagine 139 and asparagine 172. Asparagine 172 is a binding site for substrate. Serine 175 (nucleophile) is an active-site residue. Asparagine 177 is a binding site for substrate. Positions 217 and 245 each coordinate FMN. 246–247 (NT) provides a ligand contact to substrate. Residues glycine 268, glycine 297, and 318-319 (YS) contribute to the FMN site.

The protein belongs to the dihydroorotate dehydrogenase family. Type 2 subfamily. Monomer. The cofactor is FMN.

It is found in the cell membrane. The enzyme catalyses (S)-dihydroorotate + a quinone = orotate + a quinol. Its pathway is pyrimidine metabolism; UMP biosynthesis via de novo pathway; orotate from (S)-dihydroorotate (quinone route): step 1/1. Functionally, catalyzes the conversion of dihydroorotate to orotate with quinone as electron acceptor. This Klebsiella pneumoniae (strain 342) protein is Dihydroorotate dehydrogenase (quinone).